The following is a 163-amino-acid chain: Antimicrobial peptide 2 (163 aa).

A signal peptide spans Met1–Ala22. Chitin-binding type-1 domains lie at Asn26–Pro66 and Ala69–Pro107. 3 disulfide bridges follow: Cys29/Cys42, Cys36/Cys48, and Cys41/Cys55. A propeptide spanning residues Asn58–Thr67 is cleaved from the precursor. 4 disulfide bridges follow: Cys72–Cys83, Cys77–Cys89, Cys82–Cys96, and Cys101–Cys105. Positions Met100 to Pro163 are excised as a propeptide.

In terms of tissue distribution, expressed in roots, flowers, stem and leaves.

Antimicrobial peptide. The protein is Antimicrobial peptide 2 of Stellaria media (Common chickweed).